A 475-amino-acid chain; its full sequence is ATP synthase subunit beta (475 aa).

148 to 155 provides a ligand contact to ATP; sequence GGAGVGKT.

It belongs to the ATPase alpha/beta chains family. F-type ATPases have 2 components, CF(1) - the catalytic core - and CF(0) - the membrane proton channel. CF(1) has five subunits: alpha(3), beta(3), gamma(1), delta(1), epsilon(1). CF(0) has three main subunits: a(1), b(2) and c(9-12). The alpha and beta chains form an alternating ring which encloses part of the gamma chain. CF(1) is attached to CF(0) by a central stalk formed by the gamma and epsilon chains, while a peripheral stalk is formed by the delta and b chains.

It is found in the cell inner membrane. It carries out the reaction ATP + H2O + 4 H(+)(in) = ADP + phosphate + 5 H(+)(out). Its function is as follows. Produces ATP from ADP in the presence of a proton gradient across the membrane. The catalytic sites are hosted primarily by the beta subunits. The polypeptide is ATP synthase subunit beta (Psychrobacter sp. (strain PRwf-1)).